A 119-amino-acid chain; its full sequence is Platelet basic protein (119 aa).

Residues 1–33 (MSLRLGAISSCTTSSPFPVLQVLLPLSLLLTTL) form the signal peptide. The propeptide occupies 34 to 39 (VPATMG). 2 cysteine pairs are disulfide-bonded: cysteine 54/cysteine 80 and cysteine 56/cysteine 96.

Its subcellular location is the secreted. Its function is as follows. Chemoattractant factor for neutrophils. The sequence is that of Platelet basic protein (PPBP) from Sus scrofa (Pig).